A 360-amino-acid chain; its full sequence is Peptide chain release factor 1 (360 aa).

An N5-methylglutamine modification is found at Q234.

This sequence belongs to the prokaryotic/mitochondrial release factor family. Post-translationally, methylated by PrmC. Methylation increases the termination efficiency of RF1.

It localises to the cytoplasm. Functionally, peptide chain release factor 1 directs the termination of translation in response to the peptide chain termination codons UAG and UAA. This Clostridium botulinum (strain Alaska E43 / Type E3) protein is Peptide chain release factor 1.